The sequence spans 268 residues: Octanoyltransferase (268 aa).

In terms of domain architecture, BPL/LPL catalytic spans Gly49–Leu237. Residues Arg87 to His94, Ala167 to Gly169, and Gly180 to Ala182 contribute to the substrate site. The Acyl-thioester intermediate role is filled by Cys198.

It belongs to the LipB family.

The protein localises to the cytoplasm. It catalyses the reaction octanoyl-[ACP] + L-lysyl-[protein] = N(6)-octanoyl-L-lysyl-[protein] + holo-[ACP] + H(+). It participates in protein modification; protein lipoylation via endogenous pathway; protein N(6)-(lipoyl)lysine from octanoyl-[acyl-carrier-protein]: step 1/2. Its function is as follows. Catalyzes the transfer of endogenously produced octanoic acid from octanoyl-acyl-carrier-protein onto the lipoyl domains of lipoate-dependent enzymes. Lipoyl-ACP can also act as a substrate although octanoyl-ACP is likely to be the physiological substrate. This is Octanoyltransferase from Corynebacterium aurimucosum (strain ATCC 700975 / DSM 44827 / CIP 107346 / CN-1) (Corynebacterium nigricans).